A 151-amino-acid chain; its full sequence is 6,7-dimethyl-8-ribityllumazine synthase (151 aa).

5-amino-6-(D-ribitylamino)uracil-binding positions include F15, 47-49 (TFE), and 71-73 (AVI). 76-77 (ET) contacts (2S)-2-hydroxy-3-oxobutyl phosphate. H79 (proton donor) is an active-site residue. L104 provides a ligand contact to 5-amino-6-(D-ribitylamino)uracil. (2S)-2-hydroxy-3-oxobutyl phosphate is bound at residue R119.

Belongs to the DMRL synthase family.

It catalyses the reaction (2S)-2-hydroxy-3-oxobutyl phosphate + 5-amino-6-(D-ribitylamino)uracil = 6,7-dimethyl-8-(1-D-ribityl)lumazine + phosphate + 2 H2O + H(+). It functions in the pathway cofactor biosynthesis; riboflavin biosynthesis; riboflavin from 2-hydroxy-3-oxobutyl phosphate and 5-amino-6-(D-ribitylamino)uracil: step 1/2. Its function is as follows. Catalyzes the formation of 6,7-dimethyl-8-ribityllumazine by condensation of 5-amino-6-(D-ribitylamino)uracil with 3,4-dihydroxy-2-butanone 4-phosphate. This is the penultimate step in the biosynthesis of riboflavin. The sequence is that of 6,7-dimethyl-8-ribityllumazine synthase from Metallosphaera sedula (strain ATCC 51363 / DSM 5348 / JCM 9185 / NBRC 15509 / TH2).